A 246-amino-acid polypeptide reads, in one-letter code: Tyrosine recombinase XerD-like (246 aa).

One can recognise a Core-binding (CB) domain in the interval 1 to 72; it reads MINDINNFIE…AVNQFLFFLY (72 aa). The Tyr recombinase domain maps to 84–246; the sequence is QETEKITLTQ…TPITLERYYR (163 aa). Residues K149 and R212 contribute to the active site. Y244 (O-(3'-phospho-DNA)-tyrosine intermediate) is an active-site residue.

Belongs to the 'phage' integrase family. XerD-like subfamily.

Its subcellular location is the cytoplasm. Its function is as follows. Putative tyrosine recombinase. Not involved in the cutting and rejoining of the recombining DNA molecules on dif(SL) site. This is Tyrosine recombinase XerD-like from Streptococcus agalactiae serotype III (strain NEM316).